Reading from the N-terminus, the 67-residue chain is Small ribosomal subunit protein eS27 (67 aa).

Positions 22, 25, 41, and 44 each coordinate Zn(2+). The C4-type zinc finger occupies 22-44 (CPDCGNEQVTFSHAAMVVRCLVC).

It belongs to the eukaryotic ribosomal protein eS27 family. Part of the 30S ribosomal subunit. Zn(2+) is required as a cofactor.

This Pyrobaculum calidifontis (strain DSM 21063 / JCM 11548 / VA1) protein is Small ribosomal subunit protein eS27.